The primary structure comprises 327 residues: Thiamine-binding periplasmic protein (327 aa).

Residues 1–18 (MLKKCLPLLLLCTAPVFA) form the signal peptide. Residues 59 to 60 (DG), 161 to 162 (ST), Trp197, and 215 to 218 (YTTS) contribute to the thiamine site.

The protein belongs to the bacterial solute-binding protein 1 family. Monomer in solution. The complex is composed of two ATP-binding proteins (ThiQ), two transmembrane proteins (ThiP) and a solute-binding protein (ThiB).

The protein resides in the periplasm. Transport is inhibited by the sulfhydryl-specific modifier N-ethylmaleimide. In terms of biological role, part of the ABC transporter complex ThiBPQ involved in thiamine import. Binds thiamine, thiamine phosphate and thiamine diphosphate with high affinity. This Escherichia coli (strain K12) protein is Thiamine-binding periplasmic protein (thiB).